Consider the following 113-residue polypeptide: uncharacterized protein (113 aa).

An N-terminal signal peptide occupies residues methionine 1–alanine 38.

This is an uncharacterized protein from Haemophilus influenzae (strain ATCC 51907 / DSM 11121 / KW20 / Rd).